Here is a 160-residue protein sequence, read N- to C-terminus: Large ribosomal subunit protein eL21 (160 aa).

Basic and acidic residues-rich tracts occupy residues 112 to 123 (NDQKKKEAKEKG) and 136 to 145 (REAHFVRTNG). A disordered region spans residues 112–145 (NDQKKKEAKEKGTWVQLKRQPAPPREAHFVRTNG).

The protein belongs to the eukaryotic ribosomal protein eL21 family. In terms of assembly, component of the large ribosomal subunit.

Its subcellular location is the cytoplasm. It localises to the cytosol. The protein resides in the endoplasmic reticulum. Component of the large ribosomal subunit. The ribosome is a large ribonucleoprotein complex responsible for the synthesis of proteins in the cell. This is Large ribosomal subunit protein eL21 from Mus musculus (Mouse).